The chain runs to 127 residues: Glycine cleavage system H protein (127 aa).

The region spanning 27–109 (TVRVGITHIA…YGEGWLYEVK (83 aa)) is the Lipoyl-binding domain. Lys-68 bears the N6-lipoyllysine mark.

The protein belongs to the GcvH family. As to quaternary structure, the glycine cleavage system is composed of four proteins: P, T, L and H. (R)-lipoate serves as cofactor.

Functionally, the glycine cleavage system catalyzes the degradation of glycine. The H protein shuttles the methylamine group of glycine from the P protein to the T protein. The sequence is that of Glycine cleavage system H protein from Corynebacterium jeikeium (strain K411).